A 444-amino-acid chain; its full sequence is Maintenance of mitochondrial morphology protein 1 (444 aa).

Over 1-110 (MNNLDNLAGN…SFSGWSFIEG (110 aa)) the chain is Lumenal. Residues 111–131 (FIIGQFSVIIVLIFFIKFFVF) traverse the membrane as a helical segment. Residues 132-444 (SDGSSSNSSN…TDDVPLSKAE (313 aa)) lie on the Cytoplasmic side of the membrane. The 213-residue stretch at 207–419 (PSESLDWFNV…EPRFQCIRLP (213 aa)) folds into the SMP-LTD domain.

This sequence belongs to the MMM1 family. Homodimer. Component of the ER-mitochondria encounter structure (ERMES) or MDM complex, composed of MMM1, MDM10, MDM12 and MDM34. An MMM1 homodimer associates with one molecule of MDM12 on each side in a pairwise head-to-tail manner, and the SMP-LTD domains of MMM1 and MDM12 generate a continuous hydrophobic tunnel for phospholipid trafficking.

It is found in the endoplasmic reticulum membrane. Its function is as follows. Component of the ERMES/MDM complex, which serves as a molecular tether to connect the endoplasmic reticulum (ER) and mitochondria. Components of this complex are involved in the control of mitochondrial shape and protein biogenesis, and function in nonvesicular lipid trafficking between the ER and mitochondria. The MDM12-MMM1 subcomplex functions in the major beta-barrel assembly pathway that is responsible for biogenesis of all outer membrane beta-barrel proteins, and acts in a late step after the SAM complex. The MDM10-MDM12-MMM1 subcomplex further acts in the TOM40-specific pathway after the action of the MDM12-MMM1 complex. Essential for establishing and maintaining the structure of mitochondria and maintenance of mtDNA nucleoids. This is Maintenance of mitochondrial morphology protein 1 from Vanderwaltozyma polyspora (strain ATCC 22028 / DSM 70294 / BCRC 21397 / CBS 2163 / NBRC 10782 / NRRL Y-8283 / UCD 57-17) (Kluyveromyces polysporus).